Here is a 478-residue protein sequence, read N- to C-terminus: Cobyric acid synthase (478 aa).

The 188-residue stretch at 250 to 437 (QLRVVVPVLP…VHGVFDHPMH (188 aa)) folds into the GATase cobBQ-type domain. Cys331 functions as the Nucleophile in the catalytic mechanism. His429 is an active-site residue.

The protein belongs to the CobB/CobQ family. CobQ subfamily.

The protein operates within cofactor biosynthesis; adenosylcobalamin biosynthesis. Catalyzes amidations at positions B, D, E, and G on adenosylcobyrinic A,C-diamide. NH(2) groups are provided by glutamine, and one molecule of ATP is hydrogenolyzed for each amidation. This is Cobyric acid synthase from Xanthomonas euvesicatoria pv. vesicatoria (strain 85-10) (Xanthomonas campestris pv. vesicatoria).